A 1150-amino-acid polypeptide reads, in one-letter code: MQGRPNGASGDPNPRNDTSVTIDSDSDNGSRHRIAEVRGSSPSQIVPEKATILNDKVKAGPCLSTEKDLGIRKQLALSHTESIIASNPIAVMPLESPKQRLAMESSTESHRLRRARTRNPWICSGLVLFVTVSALLILSIIVYSYQSLQVDPQGCRTPSMRPTYIKLVGFDSEHTRFASKYGLYLYRERGVDEYSEEDIGIKGVPVLFLPGNAGSYKQGRSLASEASLYFHDVLQYHQERLKTGVRGLDFFMADFNEDMAAFHGQTLLDQAEYVNDALAYILSLYHDPRRPGRDLNLPDPTSVILIGHSMGGIVARTVLTMSNYQTNSVNTIITMSTPHARPPVSFDSDLVHTYKQVNNYWREAYSQKWANNNPLWHVTLISIAGGGGDTIVPSDYTSLSSLVPETHGFTVFTTTIPNVWTGMDHLSIAWCDSFRKVIIRSLFDVIDVRRSSQTKQRADRMSVFKKWYLTGMEVSAERKLPRKEHTTLLTLGDDTKSKSILRQDEKLTLRGFGHRKGPKSHLMPIPPRGGVPEKKLTLLTDQKLNSMETNRKLDVLFCSDFPLRAGQSATLPSLNLDLSGGSASSIRLVCKSAAEDVISLPTSTSSSKFAFDNVPSLSYLQYDLEDLTEYQFVVVIDKAETRYPGWLHAEFSDSSDSVIPTRVGLGRLLSAGLNIRLPAERPMVIDIKVPALHSSLLAYKLHVESKDCDGTELFKPMVRQYISGPYESKFFVNVRDAEINLHGIAPYMPPHIGDNAAATGISFQLWSDASCNGPLQLSLKVDVLGSMGKLAMRYRTVFAAFPLLVVSLVLRQQFKVYNQTGIFISFMQALDLCIRSSIPLLFLGLTFLASSLATSKNTLSKSASPNAGSNSTESVIDFSANDLLLGSQDAFFWFLVPLFGIISIGTCVIVNYVAMILIHALGAIRAILMSRKGYIKHDERGNTSIFWSLSTKNRVINTAVLLLFVATFIPYQFAYVVACVVQLVTCVQASWHARETRSASHSSFYNYVHSIFILMIWILPINVLVLIVWIHDLAVHWLTPFSSNHNVFSILPFMLLVETLTCGTMIPRITTHLRHITYVLFFFLAAYSAIYGVTYAYLLHHITNLVIAWLVGIHFFAGGFSLRNLSRVINDSDGVPNGSPITDGHIKKLP.

The disordered stretch occupies residues 1 to 43 (MQGRPNGASGDPNPRNDTSVTIDSDSDNGSRHRIAEVRGSSPS). Asn-16 and Asn-28 each carry an N-linked (GlcNAc...) asparagine glycan. Residues 122 to 142 (ICSGLVLFVTVSALLILSIIV) form a helical membrane-spanning segment. The active site involves Ser-309. Residues 790 to 810 (LAMRYRTVFAAFPLLVVSLVL) traverse the membrane as a helical segment. The N-linked (GlcNAc...) asparagine glycan is linked to Asn-818. A helical transmembrane segment spans residues 829–849 (ALDLCIRSSIPLLFLGLTFLA). N-linked (GlcNAc...) asparagine glycosylation is present at Asn-870. The chain crosses the membrane as a helical span at residues 890 to 910 (AFFWFLVPLFGIISIGTCVIV). Asn-942 carries N-linked (GlcNAc...) asparagine glycosylation. A run of 5 helical transmembrane segments spans residues 960–980 (VLLL…VACV), 1010–1030 (SIFI…IVWI), 1047–1067 (VFSI…TMIP), 1079–1099 (VLFF…AYLL), and 1102–1122 (ITNL…GFSL). 2 N-linked (GlcNAc...) asparagine glycosylation sites follow: Asn-1124 and Asn-1130.

Belongs to the GPI inositol-deacylase family.

It is found in the endoplasmic reticulum membrane. In terms of biological role, involved in inositol deacylation of GPI-anchored proteins which plays important roles in the quality control and ER-associated degradation of GPI-anchored proteins. In Coccidioides immitis (strain RS) (Valley fever fungus), this protein is GPI inositol-deacylase (BST1).